Consider the following 403-residue polypeptide: G2/mitotic-specific cyclin-B3 (403 aa).

Disordered regions lie at residues 1–86 (MPVA…APPA) and 102–122 (RKTP…PEEP). Positions 7–25 (SKAQSSKQPRASKAPSVTE) are enriched in polar residues. The short motif at 51–59 (RSAFGDITN) is the D-box element.

It belongs to the cyclin family. Cyclin AB subfamily. In terms of assembly, interacts with the CDK1 and CDK2 protein kinases. Post-translationally, ubiquitinated, leading to its degradation.

It localises to the nucleus. In terms of biological role, cyclins are positive regulatory subunits of the cyclin-dependent kinases (CDKs), and thereby play an essential role in the control of the cell cycle, notably via their destruction during cell division. Could be involved at the G2/M (mitosis or meiosis) transition. G2/M cyclins accumulate steadily during G2 and are abruptly destroyed at mitosis. The protein is G2/mitotic-specific cyclin-B3 (CCNB3) of Gallus gallus (Chicken).